A 523-amino-acid polypeptide reads, in one-letter code: NADP-specific glutamate dehydrogenase (523 aa).

The interval 26 to 50 (CARGRSAKRDVAAKRLRSRSPRMDA) is disordered. Residue K202 is part of the active site.

The protein belongs to the Glu/Leu/Phe/Val dehydrogenases family. As to quaternary structure, homo- and heterohexamer of alpha and beta subunits. Both subunits are encoded by the same gene. In terms of processing, the N-termini of the alpha and the beta chains are blocked.

The protein localises to the plastid. It is found in the chloroplast. It catalyses the reaction L-glutamate + NADP(+) + H2O = 2-oxoglutarate + NH4(+) + NADPH + H(+). This chain is NADP-specific glutamate dehydrogenase, found in Chlorella sorokiniana (Freshwater green alga).